The sequence spans 460 residues: Cysteine--tRNA ligase (460 aa).

Zn(2+) is bound at residue C28. The 'HIGH' region motif lies at 30-40; sequence MTVYDYCHLGH. 3 residues coordinate Zn(2+): C209, H234, and E238. The 'KMSKS' region motif lies at 266 to 270; it reads KMSKS. K269 contacts ATP.

This sequence belongs to the class-I aminoacyl-tRNA synthetase family. As to quaternary structure, monomer. It depends on Zn(2+) as a cofactor.

The protein resides in the cytoplasm. It catalyses the reaction tRNA(Cys) + L-cysteine + ATP = L-cysteinyl-tRNA(Cys) + AMP + diphosphate. The chain is Cysteine--tRNA ligase from Pseudomonas paraeruginosa (strain DSM 24068 / PA7) (Pseudomonas aeruginosa (strain PA7)).